The chain runs to 103 residues: Growth-regulated alpha protein (103 aa).

Positions 1 to 30 are cleaved as a signal peptide; it reads MARAANPAPRLLGAAMLLLLLVAAGRRAAG. Cystine bridges form between cysteine 39–cysteine 65 and cysteine 41–cysteine 81.

Belongs to the intercrine alpha (chemokine CxC) family.

Its subcellular location is the secreted. Functionally, has chemotactic activity for neutrophils. This chain is Growth-regulated alpha protein (CXCL1), found in Ovis aries (Sheep).